Consider the following 215-residue polypeptide: Cytochrome b6 (215 aa).

Residues 32–52 (VFYCFGGMTLTCFLVQLATGF) form a helical membrane-spanning segment. Cys35 lines the heme c pocket. Heme b is bound by residues His86 and His100. 3 consecutive transmembrane segments (helical) span residues 90–110 (ASMMVLMMILHIFRVYLTGGF), 116–136 (LTWITGVILAVLTVSFGVTGY), and 186–206 (LHTLFLPALSVIFLLAHFLMI). His187 and His202 together coordinate heme b.

This sequence belongs to the cytochrome b family. PetB subfamily. In terms of assembly, the 4 large subunits of the cytochrome b6-f complex are cytochrome b6, subunit IV (17 kDa polypeptide, PetD), cytochrome f and the Rieske protein, while the 4 small subunits are PetG, PetL, PetM and PetN. The complex functions as a dimer. Heme b is required as a cofactor. Heme c serves as cofactor.

Its subcellular location is the plastid. The protein resides in the chloroplast thylakoid membrane. Its function is as follows. Component of the cytochrome b6-f complex, which mediates electron transfer between photosystem II (PSII) and photosystem I (PSI), cyclic electron flow around PSI, and state transitions. In Cyanidium caldarium (Red alga), this protein is Cytochrome b6.